Reading from the N-terminus, the 197-residue chain is Guanylate kinase (197 aa).

Ser2 is subject to N-acetylserine. A Guanylate kinase-like domain is found at 4-186 (PRPVVLSGPS…AYAELKEALS (183 aa)). Position 14-19 (14-19 (GAGKST)) interacts with ATP. 37–51 (SHTTRNPRPGEENGK) is a substrate binding site. Catalysis depends on residues Arg44, Arg137, and Arg148. Arg137 is an ATP binding site. An ATP-binding site is contributed by 171-172 (ND).

It belongs to the guanylate kinase family. As to quaternary structure, monomer. Interacts with RD3. Widely expressed.

The protein resides in the photoreceptor inner segment. It localises to the cytoplasm. Its subcellular location is the cytosol. The protein localises to the mitochondrion. The enzyme catalyses GMP + ATP = GDP + ADP. Up-regulated by RD3. Functionally, catalyzes the phosphorylation of GMP to GDP. Essential enzyme for recycling GMP and indirectly, cyclic GMP (cGMP). Involved in the cGMP metabolism in photoreceptors. It may also have a role in the survival and growth progression of some tumors. In addition to its physiological role, GUK1 is essential for converting prodrugs used for the treatment of cancers and viral infections into their pharmacologically active metabolites, most notably acyclovir, ganciclovir, and 6-thioguanine and its closely related analog 6-mercaptopurine. In Homo sapiens (Human), this protein is Guanylate kinase.